Here is a 250-residue protein sequence, read N- to C-terminus: MSTATATALTPELAAKVERLDALLAQIGERHDKVKFASSLAAEDMLLTHAILSKGVPIGIFSLNTGRLHAETLGMIDRVRERYGYEIEQFHPQQDAVDRYVAEHGLNAFYESVELRKSCCHIRKVEPLNRALADVGAWVTGQRREQSVTRAELHEEEQDEARGIAKYNPLADWTEADVWAYLKAFDVPVNPLHARGYPSIGCEPCTRAIRPGEDSRAGRWWWESRDTKECGLHITTITPIPANAEAGAAH.

Residues Cys119, Cys120, Cys202, and Cys205 each contribute to the [4Fe-4S] cluster site. The active-site Nucleophile; cysteine thiosulfonate intermediate is the Cys230.

This sequence belongs to the PAPS reductase family. CysH subfamily. [4Fe-4S] cluster serves as cofactor.

The protein resides in the cytoplasm. The enzyme catalyses [thioredoxin]-disulfide + sulfite + AMP + 2 H(+) = adenosine 5'-phosphosulfate + [thioredoxin]-dithiol. It participates in sulfur metabolism; hydrogen sulfide biosynthesis; sulfite from sulfate. In terms of biological role, catalyzes the formation of sulfite from adenosine 5'-phosphosulfate (APS) using thioredoxin as an electron donor. This Burkholderia cepacia (Pseudomonas cepacia) protein is Adenosine 5'-phosphosulfate reductase.